The following is a 188-amino-acid chain: MNIQSDGIRIDLVTGSRRISNLGWASVLLLGTSGFLLTGLSSYLGKDLIPFLYPSEEHMKIAFAPQGLVMCFYGIAGLFLSTYLWCAILWNVGGGYNEFDRQEGTITIFRWGFPGQNRRIRIRCLIKDVKAVRIETQTGLLSRNDISILLRDKQRLVFNQLGDSLTLQEIEDKAVQLAQFLQVPLEGV.

A run of 2 helical transmembrane segments spans residues Leu-22 to Ser-42 and Leu-68 to Ile-88.

It belongs to the Ycf4 family.

Its subcellular location is the plastid. It is found in the chloroplast thylakoid membrane. Seems to be required for the assembly of the photosystem I complex. This chain is Photosystem I assembly protein Ycf4, found in Zygnema circumcarinatum (Green alga).